Here is a 103-residue protein sequence, read N- to C-terminus: Small ribosomal subunit protein uS10 (103 aa).

This sequence belongs to the universal ribosomal protein uS10 family. In terms of assembly, part of the 30S ribosomal subunit.

In terms of biological role, involved in the binding of tRNA to the ribosomes. This Vibrio campbellii (strain ATCC BAA-1116) protein is Small ribosomal subunit protein uS10.